A 262-amino-acid chain; its full sequence is Ribosome-recycling factor, mitochondrial (262 aa).

The transit peptide at Met-1–Phe-55 directs the protein to the mitochondrion.

Belongs to the RRF family.

Its subcellular location is the mitochondrion. Functionally, responsible for the disassembly of ribosomes from messenger RNA at the termination of mitochondrial protein biosynthesis. Acts in collaboration with GFM2. Promotes mitochondrial ribosome recycling by dissolution of intersubunit contacts. In Homo sapiens (Human), this protein is Ribosome-recycling factor, mitochondrial.